Here is a 411-residue protein sequence, read N- to C-terminus: Argininosuccinate synthase (411 aa).

ATP is bound by residues 11–19 (AYSGGLDTS) and Ala-37. L-citrulline contacts are provided by Tyr-88 and Ser-93. 116-124 (SHGATGKGN) lines the ATP pocket. Thr-120, Asn-124, and Asp-125 together coordinate L-aspartate. Asn-124 lines the L-citrulline pocket. L-citrulline contacts are provided by Arg-128, Ser-181, Ser-190, Glu-271, and Tyr-283.

The protein belongs to the argininosuccinate synthase family. As to quaternary structure, homotetramer.

It is found in the cytoplasm. It localises to the cytosol. The catalysed reaction is L-citrulline + L-aspartate + ATP = 2-(N(omega)-L-arginino)succinate + AMP + diphosphate + H(+). The protein operates within amino-acid biosynthesis; L-arginine biosynthesis; L-arginine from L-ornithine and carbamoyl phosphate: step 2/3. It participates in nitrogen metabolism; urea cycle; (N(omega)-L-arginino)succinate from L-aspartate and L-citrulline: step 1/1. Its function is as follows. One of the enzymes of the urea cycle, the metabolic pathway transforming neurotoxic amonia produced by protein catabolism into inocuous urea in the liver of ureotelic animals. Catalyzes the formation of arginosuccinate from aspartate, citrulline and ATP and together with ASL it is responsible for the biosynthesis of arginine in most body tissues. The protein is Argininosuccinate synthase of Xenopus laevis (African clawed frog).